A 287-amino-acid polypeptide reads, in one-letter code: S-methyl-5'-thioadenosine phosphorylase (287 aa).

Residues T13 and 55-56 each bind phosphate; that span reads RH. M186 contributes to the substrate binding site. T187 serves as a coordination point for phosphate. 210 to 212 contacts substrate; that stretch reads DYD.

The protein belongs to the PNP/MTAP phosphorylase family. MTAP subfamily. In terms of assembly, homohexamer. Dimer of a homotrimer.

It carries out the reaction S-methyl-5'-thioadenosine + phosphate = 5-(methylsulfanyl)-alpha-D-ribose 1-phosphate + adenine. It participates in amino-acid biosynthesis; L-methionine biosynthesis via salvage pathway; S-methyl-5-thio-alpha-D-ribose 1-phosphate from S-methyl-5'-thioadenosine (phosphorylase route): step 1/1. Its function is as follows. Catalyzes the reversible phosphorylation of S-methyl-5'-thioadenosine (MTA) to adenine and 5-methylthioribose-1-phosphate. Involved in the breakdown of MTA, a major by-product of polyamine biosynthesis. Responsible for the first step in the methionine salvage pathway after MTA has been generated from S-adenosylmethionine. Has broad substrate specificity with 6-aminopurine nucleosides as preferred substrates. This is S-methyl-5'-thioadenosine phosphorylase from Leptospira interrogans serogroup Icterohaemorrhagiae serovar Lai (strain 56601).